The following is a 383-amino-acid chain: La protein homolog (383 aa).

A disordered region spans residues 1–43; that stretch reads MTEVEAKATATEETTKEEEEAPETTAEQTEESAQETSENVSKL. Over residues 15–33 the composition is skewed to acidic residues; that stretch reads TKEEEEAPETTAEQTEESA. An HTH La-type RNA-binding domain is found at 37-129; sequence SENVSKLEAS…RRHPERPLPE (93 aa). The 88-residue stretch at 141–228 folds into the RRM domain; sequence RTVYVKGFAP…RKMQDDYFEE (88 aa). Residues 249–368 form the xRRM domain; it reads HLPKGASVHL…RTPEGRQASR (120 aa). Residues 343-383 are disordered; it reads KDQQARRQASNARNKGRTPEGRQASRPPQEWRRKAKGGRGE.

The protein resides in the nucleus. Its subcellular location is the cytoplasm. In terms of biological role, may be involved in transcription termination by RNA polymerase III. Binds RNA and DNA. Binds to the 3' end of the minus strand of Sindbis virus RNA. This may be significant for Sindbis virus RNA replication. This is La protein homolog from Aedes albopictus (Asian tiger mosquito).